A 172-amino-acid polypeptide reads, in one-letter code: Shikimate kinase 2 (172 aa).

Residue 9–16 (GARAAGKT) participates in ATP binding.

Belongs to the shikimate kinase family.

It is found in the cytoplasm. The enzyme catalyses shikimate + ATP = 3-phosphoshikimate + ADP + H(+). The protein operates within metabolic intermediate biosynthesis; chorismate biosynthesis; chorismate from D-erythrose 4-phosphate and phosphoenolpyruvate: step 5/7. This Syntrophotalea carbinolica (strain DSM 2380 / NBRC 103641 / GraBd1) (Pelobacter carbinolicus) protein is Shikimate kinase 2.